A 148-amino-acid polypeptide reads, in one-letter code: Probable glycine cleavage system H protein 2 (148 aa).

The 83-residue stretch at 32-114 (VIVVGITDIA…YGKGWLVKMK (83 aa)) folds into the Lipoyl-binding domain. Position 73 is an N6-lipoyllysine (K73).

The protein belongs to the GcvH family. As to quaternary structure, the glycine cleavage system is composed of four proteins: P, T, L and H. Requires (R)-lipoate as cofactor.

The glycine cleavage system catalyzes the degradation of glycine. The H protein shuttles the methylamine group of glycine from the P protein to the T protein. This Sulfurisphaera tokodaii (strain DSM 16993 / JCM 10545 / NBRC 100140 / 7) (Sulfolobus tokodaii) protein is Probable glycine cleavage system H protein 2.